The sequence spans 334 residues: Phosphoribosylformylglycinamidine cyclo-ligase (334 aa).

This sequence belongs to the AIR synthase family.

It localises to the cytoplasm. It catalyses the reaction 2-formamido-N(1)-(5-O-phospho-beta-D-ribosyl)acetamidine + ATP = 5-amino-1-(5-phospho-beta-D-ribosyl)imidazole + ADP + phosphate + H(+). The protein operates within purine metabolism; IMP biosynthesis via de novo pathway; 5-amino-1-(5-phospho-D-ribosyl)imidazole from N(2)-formyl-N(1)-(5-phospho-D-ribosyl)glycinamide: step 2/2. The polypeptide is Phosphoribosylformylglycinamidine cyclo-ligase (Thermococcus kodakarensis (strain ATCC BAA-918 / JCM 12380 / KOD1) (Pyrococcus kodakaraensis (strain KOD1))).